Consider the following 874-residue polypeptide: Rho GTPase-activating protein 42 (874 aa).

The 256-residue stretch at 7 to 262 folds into the BAR domain; the sequence is EFSDSYLDSP…MKSANQDYRP (256 aa). Residues 225 to 261 adopt a coiled-coil conformation; sequence KQQLQFNLQNTRNNFESTRQEVERLMQRMKSANQDYR. The PH domain occupies 265–374; the sequence is QWTMEGYLYV…WLEAMDGKEP (110 aa). The residue at position 376 (Tyr376) is a Phosphotyrosine. Residues 376-572 form the Rho-GAP domain; that stretch reads YTLPAIISKK…ILIEHYEKIF (197 aa). Residues 575–720 are disordered; that stretch reads APDPSIPLPQ…GDVSPPIDLV (146 aa). Residues 620–650 show a composition bias toward low complexity; sequence DSYSSSPDSTPMGSIESLSSHSSEQNSTTKS. The span at 667–686 shows a compositional bias: polar residues; sequence TPSSSNGQKSLGLWTTSPES. Position 683 is a phosphoserine (Ser683). Residues 687 to 697 are compositionally biased toward basic and acidic residues; it reads SSREDATKTDA. Over residues 700 to 711 the composition is skewed to polar residues; that stretch reads DCQSVASVTSPG. Residues Ser740, Ser753, Ser756, and Ser811 each carry the phosphoserine modification. A compositionally biased stretch (polar residues) spans 749 to 762; that stretch reads SYSGSIQSLTSVGS. The segment at 749–777 is disordered; that stretch reads SYSGSIQSLTSVGSKETPKASPNPDLPPK. The 59-residue stretch at 816–874 folds into the SH3 domain; sequence SSGRQAKAMYSCKAEHSHELSFPQGAIFSNVYPSVEPGWLKATYEGKTGLVPENYVVFL. Tyr870 is modified (phosphotyrosine).

Highly and selectively expressed in smooth muscle cells.

Functionally, may influence blood pressure by functioning as a GTPase-activating protein for RHOA in vascular smooth muscle. The chain is Rho GTPase-activating protein 42 from Homo sapiens (Human).